A 398-amino-acid chain; its full sequence is UPF0229 protein Ccel_0490 (398 aa).

Disordered stretches follow at residues 1–22 (MAIF…RRRH) and 68–104 (KSKP…NSEG). Basic and acidic residues-rich tracts occupy residues 11–22 (GKDRSAEDRRRH) and 78–95 (GNEK…EGKG).

The protein belongs to the UPF0229 family.

The sequence is that of UPF0229 protein Ccel_0490 from Ruminiclostridium cellulolyticum (strain ATCC 35319 / DSM 5812 / JCM 6584 / H10) (Clostridium cellulolyticum).